A 773-amino-acid chain; its full sequence is Endonuclease MutS2 (773 aa).

Residue 334–341 (GANAGGKT) participates in ATP binding. The Smr domain maps to 698 to 773 (VDLRGMRADV…GDGMTMVTLK (76 aa)).

This sequence belongs to the DNA mismatch repair MutS family. MutS2 subfamily. Homodimer. Binds to stalled ribosomes, contacting rRNA.

Its function is as follows. Endonuclease that is involved in the suppression of homologous recombination and thus may have a key role in the control of bacterial genetic diversity. Acts as a ribosome collision sensor, splitting the ribosome into its 2 subunits. Detects stalled/collided 70S ribosomes which it binds and splits by an ATP-hydrolysis driven conformational change. Acts upstream of the ribosome quality control system (RQC), a ribosome-associated complex that mediates the extraction of incompletely synthesized nascent chains from stalled ribosomes and their subsequent degradation. Probably generates substrates for RQC. In Solidesulfovibrio magneticus (strain ATCC 700980 / DSM 13731 / RS-1) (Desulfovibrio magneticus), this protein is Endonuclease MutS2.